The following is a 463-amino-acid chain: Chromosomal replication initiator protein DnaA (463 aa).

A domain I, interacts with DnaA modulators region spans residues 1 to 83 (MSTNQIILTD…LQLFQHYNNT (83 aa)). The tract at residues 83-124 (TIKSIEIITKELPGTTQTVTELPTKTFADIGSSELNSENIFS) is domain II. Positions 125 to 343 (TLDVRFTFDN…GALNKVIAHS (219 aa)) are domain III, AAA+ region. The ATP site is built by G171, G173, K174, and T175. A domain IV, binds dsDNA region spans residues 344–463 (NFTLKEITLE…IHLLMKILQN (120 aa)).

It belongs to the DnaA family. Oligomerizes as a right-handed, spiral filament on DNA at oriC.

The protein resides in the cytoplasm. Its function is as follows. Plays an essential role in the initiation and regulation of chromosomal replication. ATP-DnaA binds to the origin of replication (oriC) to initiate formation of the DNA replication initiation complex once per cell cycle. Binds the DnaA box (a 9 base pair repeat at the origin) and separates the double-stranded (ds)DNA. Forms a right-handed helical filament on oriC DNA; dsDNA binds to the exterior of the filament while single-stranded (ss)DNA is stabiized in the filament's interior. The ATP-DnaA-oriC complex binds and stabilizes one strand of the AT-rich DNA unwinding element (DUE), permitting loading of DNA polymerase. After initiation quickly degrades to an ADP-DnaA complex that is not apt for DNA replication. Binds acidic phospholipids. The protein is Chromosomal replication initiator protein DnaA of Rickettsia africae (strain ESF-5).